Reading from the N-terminus, the 130-residue chain is Small ribosomal subunit protein uS8 (130 aa).

The protein belongs to the universal ribosomal protein uS8 family. Part of the 30S ribosomal subunit. Contacts proteins S5 and S12.

Its function is as follows. One of the primary rRNA binding proteins, it binds directly to 16S rRNA central domain where it helps coordinate assembly of the platform of the 30S subunit. This chain is Small ribosomal subunit protein uS8, found in Aster yellows witches'-broom phytoplasma (strain AYWB).